A 514-amino-acid chain; its full sequence is Sugar transport protein 11 (514 aa).

The Cytoplasmic portion of the chain corresponds to 1–19; sequence MAGGAFIDESGHGGDYEGR. A helical transmembrane segment spans residues 20–40; that stretch reads VTAFVMITCIVAAMGGLLFGY. Topologically, residues 41 to 82 are extracellular; sequence DIGISGGVISMEDFLTKFFPDVLRQMQNKRGRETEYCKYDNE. The helical transmembrane segment at 83–103 threads the bilayer; it reads LLTLFTSSLYLAALFASFLAS. The Cytoplasmic portion of the chain corresponds to 104–112; the sequence is TITRLFGRK. The chain crosses the membrane as a helical span at residues 113–133; the sequence is VSMVIGSLAFLSGALLNGLAI. Residues 134-137 are Extracellular-facing; that stretch reads NLEM. The chain crosses the membrane as a helical span at residues 138 to 158; that stretch reads LIIGRLFLGVGVGFANQSVPL. The Cytoplasmic segment spans residues 159 to 169; sequence YLSEMAPAKIR. The chain crosses the membrane as a helical span at residues 170–190; the sequence is GALNIGFQLAITIGILAANIV. Over 191–204 the chain is Extracellular; that stretch reads NYVTPKLQNGIGWR. The chain crosses the membrane as a helical span at residues 205-225; that stretch reads LSLGLAGVPAVMMLVGCFFLP. Residues 226 to 290 lie on the Cytoplasmic side of the membrane; sequence DTPNSILERG…RYRPQLTFCT (65 aa). A helical membrane pass occupies residues 291–311; it reads FIPFFQQLTGINVIMFYAPVL. Topologically, residues 312-320 are extracellular; it reads FKTIGFGND. Residues 321 to 341 traverse the membrane as a helical segment; the sequence is ASLISAVITGLVNVLSTIVSI. The Cytoplasmic portion of the chain corresponds to 342–350; the sequence is YSVDKFGRR. Residues 351–371 form a helical membrane-spanning segment; sequence ALFLQGGFQMIVTQIAVGSMI. Over 372–389 the chain is Extracellular; the sequence is GWKFGFNGEGNLSGVDAD. A helical membrane pass occupies residues 390-410; that stretch reads IILALICLYVAGFAWSWGPLG. Over 411–428 the chain is Cytoplasmic; that stretch reads WLVPSEICPLEIRSAGQS. The helical transmembrane segment at 429–449 threads the bilayer; sequence LNVSVNMFFTFFIGQFFLTML. Topologically, residues 450 to 453 are extracellular; the sequence is CHMK. Residues 454–474 form a helical membrane-spanning segment; that stretch reads FGLFYFFAGMVLIMTIFIYFL. Over 475–514 the chain is Cytoplasmic; sequence LPETKGVPIEEMGKVWKEHRYWGKYSNNDDGDDVDDDAYF.

The protein belongs to the major facilitator superfamily. Sugar transporter (TC 2.A.1.1) family. Specifically expressed in germinating pollen and pollen tube (at protein level).

It localises to the cell membrane. Its activity is regulated as follows. Inhibited by uncouplers such as 2,4-dinitrophenol and carbonyl cyanide-m-chlorophenyl-hydrazone. Mediates an active uptake of hexoses, probably by sugar/hydrogen symport. Can transport glucose, galactose, mannose, xylose and 3-O-methylglucose, but not fructose and ribose. This Arabidopsis thaliana (Mouse-ear cress) protein is Sugar transport protein 11 (STP11).